The chain runs to 284 residues: Lipoyl synthase (284 aa).

7 residues coordinate [4Fe-4S] cluster: Cys-36, Cys-41, Cys-47, Cys-62, Cys-66, Cys-69, and Ser-273. Positions 48-262 (WGKGTATFMI…RTIGLKKGFR (215 aa)) constitute a Radical SAM core domain.

It belongs to the radical SAM superfamily. Lipoyl synthase family. The cofactor is [4Fe-4S] cluster.

It localises to the cytoplasm. The enzyme catalyses [[Fe-S] cluster scaffold protein carrying a second [4Fe-4S](2+) cluster] + N(6)-octanoyl-L-lysyl-[protein] + 2 oxidized [2Fe-2S]-[ferredoxin] + 2 S-adenosyl-L-methionine + 4 H(+) = [[Fe-S] cluster scaffold protein] + N(6)-[(R)-dihydrolipoyl]-L-lysyl-[protein] + 4 Fe(3+) + 2 hydrogen sulfide + 2 5'-deoxyadenosine + 2 L-methionine + 2 reduced [2Fe-2S]-[ferredoxin]. It functions in the pathway protein modification; protein lipoylation via endogenous pathway; protein N(6)-(lipoyl)lysine from octanoyl-[acyl-carrier-protein]: step 2/2. Functionally, catalyzes the radical-mediated insertion of two sulfur atoms into the C-6 and C-8 positions of the octanoyl moiety bound to the lipoyl domains of lipoate-dependent enzymes, thereby converting the octanoylated domains into lipoylated derivatives. This Phocaeicola vulgatus (strain ATCC 8482 / DSM 1447 / JCM 5826 / CCUG 4940 / NBRC 14291 / NCTC 11154) (Bacteroides vulgatus) protein is Lipoyl synthase.